We begin with the raw amino-acid sequence, 217 residues long: Chorionic somatomammotropin hormone 2 (217 aa).

Positions 1–26 are cleaved as a signal peptide; sequence MAAGSRTSLLLAFALLCLPWLQEAGA. H44 contributes to the Zn(2+) binding site. A disulfide bond links C79 and C191. Residue E200 coordinates Zn(2+). Residues C208 and C215 are joined by a disulfide bond.

The protein belongs to the somatotropin/prolactin family. As to quaternary structure, can be found in a monomeric as well as dimeric form.

It localises to the secreted. Functionally, produced only during pregnancy and is involved in stimulating lactation, fetal growth and metabolism. Does not interact with GHR but only activates PRLR through zinc-induced dimerization. This is Chorionic somatomammotropin hormone 2 (CSH2) from Homo sapiens (Human).